Consider the following 523-residue polypeptide: Solute carrier family 35 member F5 (523 aa).

2 helical membrane passes run 69–89 and 101–121; these read MALG…SSEL and FFST…FIIW. At Ser207 the chain carries Phosphoserine. 8 helical membrane passes run 243 to 263, 268 to 288, 296 to 316, 327 to 347, 361 to 381, 395 to 415, 420 to 440, and 452 to 472; these read ISFF…EALS, AIVN…AAVF, FTLS…LVNL, TIGS…IVMI, MFFG…FFLL, VVLM…EFLW, FLTS…LSII, and WLFF…TLLC. The region spanning 252-316 is the EamA domain; that stretch reads FLANLSYQEA…SIGGVVLVNL (65 aa).

This sequence belongs to the SLC35F solute transporter family.

It is found in the membrane. Its function is as follows. Putative solute transporter. The protein is Solute carrier family 35 member F5 (SLC35F5) of Pongo abelii (Sumatran orangutan).